The sequence spans 208 residues: FMN-dependent NADH:quinone oxidoreductase 1 (208 aa).

The protein belongs to the azoreductase type 1 family. As to quaternary structure, homodimer. Requires FMN as cofactor.

The enzyme catalyses 2 a quinone + NADH + H(+) = 2 a 1,4-benzosemiquinone + NAD(+). It catalyses the reaction N,N-dimethyl-1,4-phenylenediamine + anthranilate + 2 NAD(+) = 2-(4-dimethylaminophenyl)diazenylbenzoate + 2 NADH + 2 H(+). Functionally, quinone reductase that provides resistance to thiol-specific stress caused by electrophilic quinones. Also exhibits azoreductase activity. Catalyzes the reductive cleavage of the azo bond in aromatic azo compounds to the corresponding amines. This chain is FMN-dependent NADH:quinone oxidoreductase 1, found in Bacillus cereus (strain ATCC 14579 / DSM 31 / CCUG 7414 / JCM 2152 / NBRC 15305 / NCIMB 9373 / NCTC 2599 / NRRL B-3711).